We begin with the raw amino-acid sequence, 183 residues long: MLTMDDIVREGHPALREVATEVTFPLSDEEKKLGREMLEFLINSQDEELAEKYGLRGGVGIAAPQLAVTKRFLAIHVHDEKDRLYSYVLYNPKIRSHSVQQACLSGGEGCLSVDREVPGYVVRSERVTIDAFDENGTPLKLRFKGYPAIVIQHEIDHLNGIMFYDHINKENPSYLPPDVDVFG.

The Fe cation site is built by cysteine 110 and histidine 153. Residue glutamate 154 is part of the active site. Histidine 157 lines the Fe cation pocket.

The protein belongs to the polypeptide deformylase family. Requires Fe(2+) as cofactor.

It catalyses the reaction N-terminal N-formyl-L-methionyl-[peptide] + H2O = N-terminal L-methionyl-[peptide] + formate. Removes the formyl group from the N-terminal Met of newly synthesized proteins. Requires at least a dipeptide for an efficient rate of reaction. N-terminal L-methionine is a prerequisite for activity but the enzyme has broad specificity at other positions. This chain is Peptide deformylase, found in Listeria monocytogenes serotype 4b (strain CLIP80459).